An 87-amino-acid chain; its full sequence is Sec-independent protein translocase protein TatA (87 aa).

The helical transmembrane segment at 3 to 23 threads the bilayer; the sequence is IFGIGLPEMIVILVVALLIFG. The segment at 61-87 is disordered; the sequence is EGVKVSTSASEPEKVVDVSSATNTNKN.

This sequence belongs to the TatA/E family. Forms a complex with TatC.

The protein resides in the cell inner membrane. Its function is as follows. Part of the twin-arginine translocation (Tat) system that transports large folded proteins containing a characteristic twin-arginine motif in their signal peptide across membranes. TatA could form the protein-conducting channel of the Tat system. The polypeptide is Sec-independent protein translocase protein TatA (Trichodesmium erythraeum (strain IMS101)).